The chain runs to 328 residues: Malate dehydrogenase (328 aa).

11 to 17 (GAAGQIG) contacts NAD(+). Positions 94 and 100 each coordinate substrate. NAD(+)-binding positions include Asn107, Gln114, and 131 to 133 (VGN). Substrate contacts are provided by Asn133 and Arg164. The active-site Proton acceptor is His189.

The protein belongs to the LDH/MDH superfamily. MDH type 2 family.

It catalyses the reaction (S)-malate + NAD(+) = oxaloacetate + NADH + H(+). In terms of biological role, catalyzes the reversible oxidation of malate to oxaloacetate. In Xylella fastidiosa (strain Temecula1 / ATCC 700964), this protein is Malate dehydrogenase.